We begin with the raw amino-acid sequence, 550 residues long: Hydroxylamine reductase (550 aa).

Residues Cys3, Cys6, Cys18, and Cys25 each contribute to the [2Fe-2S] cluster site. Hybrid [4Fe-2O-2S] cluster is bound by residues His249, Glu273, Cys317, Cys405, Cys433, Cys458, Glu492, and Lys494. Cysteine persulfide is present on Cys405.

The protein belongs to the HCP family. [2Fe-2S] cluster is required as a cofactor. It depends on hybrid [4Fe-2O-2S] cluster as a cofactor.

Its subcellular location is the cytoplasm. The catalysed reaction is A + NH4(+) + H2O = hydroxylamine + AH2 + H(+). Functionally, catalyzes the reduction of hydroxylamine to form NH(3) and H(2)O. In Escherichia coli O17:K52:H18 (strain UMN026 / ExPEC), this protein is Hydroxylamine reductase.